The primary structure comprises 223 residues: Octanoyltransferase (223 aa).

The 176-residue stretch at Asp-32 to Asp-207 folds into the BPL/LPL catalytic domain. Residues Arg-71–His-78, Ser-138–Gly-140, and Gly-151–Ala-153 each bind substrate. The active-site Acyl-thioester intermediate is Cys-169.

It belongs to the LipB family.

It is found in the cytoplasm. The enzyme catalyses octanoyl-[ACP] + L-lysyl-[protein] = N(6)-octanoyl-L-lysyl-[protein] + holo-[ACP] + H(+). It participates in protein modification; protein lipoylation via endogenous pathway; protein N(6)-(lipoyl)lysine from octanoyl-[acyl-carrier-protein]: step 1/2. Functionally, catalyzes the transfer of endogenously produced octanoic acid from octanoyl-acyl-carrier-protein onto the lipoyl domains of lipoate-dependent enzymes. Lipoyl-ACP can also act as a substrate although octanoyl-ACP is likely to be the physiological substrate. The chain is Octanoyltransferase from Erwinia tasmaniensis (strain DSM 17950 / CFBP 7177 / CIP 109463 / NCPPB 4357 / Et1/99).